The chain runs to 1082 residues: Probable arabinosyltransferase B (1082 aa).

A run of 13 helical transmembrane segments spans residues 28 to 50, 223 to 241, 262 to 281, 333 to 352, 359 to 381, 420 to 442, 462 to 481, 522 to 544, 557 to 574, 578 to 600, 613 to 635, 650 to 672, and 689 to 711; these read WVATIAGLLGFVLSVSIPLLPVT, LAAMLLAIVSTVIALLALW, VTAVDGVVVGGMAIWYVIGA, SIWIRLPDLICALICWLLLS, LGPAVAGSRAAMWAAGLVLLGAW, AITTAAFTLGIQPTGLIAVAALL, WPLIAPLLAAGTVILAVVFA, AISRRVAFVFTAMCLFPSLFMML, AWRLMGIIFATMFFLMFT, WTHHFGLFAAVGGAMAALATVLV, AFLSLVLFVLAFCFASTNGWWYV, GGVQISAIFFALSAIAALWAFWL, and APIPVAAGFMVVVMMASMAIGVV.

The protein belongs to the emb family.

Its subcellular location is the cell membrane. Functionally, arabinosyl transferase responsible for the polymerization of arabinose into the arabinan of arabinogalactan. The sequence is that of Probable arabinosyltransferase B (embB) from Mycolicibacterium smegmatis (Mycobacterium smegmatis).